The chain runs to 2161 residues: DNA polymerase epsilon catalytic subunit A (2161 aa).

Short sequence motifs (nuclear localization signal) lie at residues 5-12, 1137-1144, and 1239-1246; these read NRRRDRKD, HKKVREKD, and LKKRKWKV. Residues Cys-2038, Cys-2041, Cys-2063, and Cys-2068 each coordinate Zn(2+). A CysA-type zinc finger spans residues 2038–2068; that stretch reads CSNCDAYRDLDICRDPALLTEKEWSCADTQC. The [4Fe-4S] cluster site is built by Cys-2099, Cys-2102, Cys-2114, and Cys-2116. Residues 2099–2116 carry the CysB motif motif; it reads CIRCNQVKAAHLTEQCEC. A Nuclear localization signal 4 motif is present at residues 2130-2137; that stretch reads SKRMEIFM.

It belongs to the DNA polymerase type-B family. Heterotetramer. Subunit of the DNA polymerase II. Interacts (via C-terminus) with DPB2. Interacts with LHP1/TFL2. [4Fe-4S] cluster is required as a cofactor. In terms of tissue distribution, mostly expressed at low levels in inflorescence (floral meristem and flowers until anthesis), and, to a lower extent, in roots, seeds and leaves.

The protein localises to the nucleus. The enzyme catalyses DNA(n) + a 2'-deoxyribonucleoside 5'-triphosphate = DNA(n+1) + diphosphate. DNA polymerase II, which participates in chromosomal DNA replication. Required for the timing and determination of cell fate during plant embryogenesis and root pole development, by promoting cell cycle and cell type patterning. Necessary for proper shoot (SAM) and root apical meristem (RAM) functions. Involved in maintaining epigenetic states, controlling hypersensitive response (HR), and mediating abscisic acid (ABA) signaling. Required for flowering repression through a mechanism involving epigenetic gene silencing. May participate in processes involved in chromatin-mediated cellular memory. The sequence is that of DNA polymerase epsilon catalytic subunit A (POL2A) from Arabidopsis thaliana (Mouse-ear cress).